Here is a 203-residue protein sequence, read N- to C-terminus: Large ribosomal subunit protein uL18 (203 aa).

Belongs to the universal ribosomal protein uL18 family. As to quaternary structure, part of the 50S ribosomal subunit. Contacts the 5S and 23S rRNAs.

Functionally, this is one of the proteins that bind and probably mediate the attachment of the 5S RNA into the large ribosomal subunit, where it forms part of the central protuberance. This Pyrococcus abyssi (strain GE5 / Orsay) protein is Large ribosomal subunit protein uL18.